The sequence spans 1272 residues: Myosin-binding protein C, cardiac-type (1272 aa).

The disordered stretch occupies residues 95–147 (KEPEKSEPVAPAEASPAPAASELPAPPVESNQNPEVPPAETQPEEPVDPIGLF). Residues 102–117 (PVAPAEASPAPAASEL) show a composition bias toward low complexity. One can recognise an Ig-like C2-type 1 domain in the interval 137–252 (PEEPVDPIGL…NLIVNEAPVS (116 aa)). Serine 265 is modified (phosphoserine; by PKA and PKC). Threonine 274 carries the phosphothreonine; by PKA and PKC modification. The residue at position 300 (serine 300) is a Phosphoserine; by PKA. 4 consecutive Ig-like C2-type domains span residues 359-451 (KKST…VKEP), 452-542 (PILI…VQEK), 543-640 (KLEV…FVPR), and 644-763 (PKIH…ADIT). Fibronectin type-III domains follow at residues 772–868 (PPEA…IAPP) and 870–965 (EPTH…VQEI). The Ig-like C2-type 6 domain occupies 969–1057 (PKICVPRHLR…ENMTDTVAIT (89 aa)). A Fibronectin type-III 3 domain is found at 1066-1161 (PPQNIKLADV…TKNPAYIQKT (96 aa)). Serine 1169 is subject to Phosphoserine; by PKC. The Ig-like C2-type 7 domain occupies 1179–1263 (PKFTHPLVNR…VNERGEAEIE (85 aa)).

Belongs to the immunoglobulin superfamily. MyBP family. Post-translationally, substrate for phosphorylation by PKA and PKC. Reversible phosphorylation appears to modulate contraction. Expressed specifically in cardiac muscle among adult tissues, but is also expressed transiently in the skeletal muscle at early developmental stages. Isoform Type I is found in embryonic skeletal muscle and isoform Type II is found in both embryonic skeletal and cardiac muscle.

Functionally, thick filament-associated protein located in the crossbridge region of vertebrate striated muscle A bands. In vitro it binds MHC, F-actin and native thin filaments, and modifies the activity of actin-activated myosin ATPase. It may modulate muscle contraction or may play a more structural role. May be involved in the early phase of myofibrillogenesis. In Gallus gallus (Chicken), this protein is Myosin-binding protein C, cardiac-type (MYBPC3).